A 421-amino-acid chain; its full sequence is Gamma-glutamyl phosphate reductase (421 aa).

The protein belongs to the gamma-glutamyl phosphate reductase family.

The protein resides in the cytoplasm. It catalyses the reaction L-glutamate 5-semialdehyde + phosphate + NADP(+) = L-glutamyl 5-phosphate + NADPH + H(+). The protein operates within amino-acid biosynthesis; L-proline biosynthesis; L-glutamate 5-semialdehyde from L-glutamate: step 2/2. In terms of biological role, catalyzes the NADPH-dependent reduction of L-glutamate 5-phosphate into L-glutamate 5-semialdehyde and phosphate. The product spontaneously undergoes cyclization to form 1-pyrroline-5-carboxylate. In Acinetobacter baumannii (strain SDF), this protein is Gamma-glutamyl phosphate reductase.